The following is a 304-amino-acid chain: MNQHTLLPKKTERLQYFGSVSPIKGEKPVEKEKMKDLQNIRKDYFFDIQHVGVANVSHPVTITSAMMPAEQTTAANFTMTCNLPRNQKGINMSRLTELLQVYHQNGWILSFSSLQQFTKELAENMDTSSATVEVRFPWFFERKSPKLEKAGLMHADIFMSVTYRKDQPFKQRAGISAKVTTLCPCSKEISEYSAHNQRGTVSIWADIHPAASLPSDVKADLLHAAESNASARLHPVLKRPDEKAVTETAYENPRFVEDLARLIAADLFELEWVSAFEIECRNEESIHLHDAYAKLCFSKEVDKI.

Belongs to the GTP cyclohydrolase IV family.

It carries out the reaction GTP + H2O = 7,8-dihydroneopterin 3'-triphosphate + formate + H(+). It functions in the pathway cofactor biosynthesis; 7,8-dihydroneopterin triphosphate biosynthesis; 7,8-dihydroneopterin triphosphate from GTP: step 1/1. In terms of biological role, converts GTP to 7,8-dihydroneopterin triphosphate. This is GTP cyclohydrolase FolE2 (folE2) from Bacillus subtilis (strain 168).